We begin with the raw amino-acid sequence, 93 residues long: Large ribosomal subunit protein uL23cz/uL23cy (93 aa).

The protein belongs to the universal ribosomal protein uL23 family. As to quaternary structure, part of the 50S ribosomal subunit.

The protein localises to the plastid. It is found in the chloroplast. Its function is as follows. Binds to 23S rRNA. The protein is Large ribosomal subunit protein uL23cz/uL23cy (rpl23-A) of Acorus calamus (Sweet flag).